A 281-amino-acid chain; its full sequence is MIEITKRTISFFKNLTFIKQIDKDTVSDSNNSRFEFIQKEETLAVEMPVALVYNGISHTVMMATPSNLEDFALGFSLAEGVIDRVSDIYGIDVEETCNGVEVQVELATRCFVRLKDLRRTLTGRTGCGICGSEQLEQVTKKLAKLDRTFCFELKKLDGCLALLQQAQTLGKQTGSTHAVGFFSPQGELLAIREDVGRHVALDKLLGWHAKQGKPQGFVLTTSRASYEMVQKTASCGIEMLIAISAATDLAVRMAEECNLTLIGFAREGRATVYTEKVRLKI.

Cys-127 serves as the catalytic Cysteine persulfide intermediate. A Mo-bis(molybdopterin guanine dinucleotide)-binding site is contributed by 264–269 (FAREGR).

Belongs to the FdhD family.

The protein localises to the cytoplasm. In terms of biological role, required for formate dehydrogenase (FDH) activity. Acts as a sulfur carrier protein that transfers sulfur from IscS to the molybdenum cofactor prior to its insertion into FDH. In Mannheimia succiniciproducens (strain KCTC 0769BP / MBEL55E), this protein is Sulfur carrier protein FdhD.